A 279-amino-acid polypeptide reads, in one-letter code: Prohibitin-4, mitochondrial (279 aa).

G2 bears the N-acetylglycine mark. Residues 2 to 6 (GSQQV) are Mitochondrial matrix-facing. The helical; Signal-anchor for type II membrane protein transmembrane segment at 7–28 (AISFLTNLAKAAFGLGVAATAL) threads the bilayer. Residues 29–279 (NSSLYTVDGG…SMLFNLNPGR (251 aa)) lie on the Mitochondrial intermembrane side of the membrane.

The protein belongs to the prohibitin family. As to quaternary structure, component of a prohibitin multimeric complex in mitochondrial membranes. In terms of tissue distribution, mostly expressed in proliferative tissues, including vasculature, shoot and root apical tissues. Accumulates in dry seeds.

It is found in the mitochondrion inner membrane. In terms of biological role, prohibitin probably acts as a holdase/unfoldase for the stabilization of newly synthesized mitochondrial proteins. The polypeptide is Prohibitin-4, mitochondrial (PHB4) (Arabidopsis thaliana (Mouse-ear cress)).